The chain runs to 425 residues: UDP-N-acetylglucosamine 1-carboxyvinyltransferase (425 aa).

A phosphoenolpyruvate-binding site is contributed by 23-24 (KN). Position 100 (R100) interacts with UDP-N-acetyl-alpha-D-glucosamine. C124 functions as the Proton donor in the catalytic mechanism. C124 bears the 2-(S-cysteinyl)pyruvic acid O-phosphothioketal mark. UDP-N-acetyl-alpha-D-glucosamine contacts are provided by D313 and I335.

Belongs to the EPSP synthase family. MurA subfamily.

The protein resides in the cytoplasm. The catalysed reaction is phosphoenolpyruvate + UDP-N-acetyl-alpha-D-glucosamine = UDP-N-acetyl-3-O-(1-carboxyvinyl)-alpha-D-glucosamine + phosphate. It participates in cell wall biogenesis; peptidoglycan biosynthesis. Its function is as follows. Cell wall formation. Adds enolpyruvyl to UDP-N-acetylglucosamine. This Wolbachia sp. subsp. Drosophila simulans (strain wRi) protein is UDP-N-acetylglucosamine 1-carboxyvinyltransferase.